Reading from the N-terminus, the 871-residue chain is Major vault protein (871 aa).

MVP repeat units follow at residues 2–69 (SKRP…VPPR), 70–124 (HYCV…EVTP), 125–177 (LQIV…EIIK), 178–230 (ATVI…DIVN), 231–285 (AFIL…GVVD), 286–336 (VTTL…IQDV), 337–407 (YVLS…RRQA), 408–482 (IPLD…KTMV), and 483–545 (VSYR…LLGP). Residues 356–381 (TEAQEEDEEEEEEEEQAKKTSVQRRP) are disordered. Residues 357-370 (EAQEEDEEEEEEEE) show a composition bias toward acidic residues. Residues 684–710 (QEATARHEAERLEQEARGKLERQKITD) are disordered. A compositionally biased stretch (basic and acidic residues) spans 687 to 710 (TARHEAERLEQEARGKLERQKITD). Residues 688–717 (ARHEAERLEQEARGKLERQKITDQAEAERA) enclose the IQ domain.

In terms of assembly, the vault ribonucleoprotein particle is a huge (400 A x 670 A) cage structure of 12.9 MDa. It consists of a dimer of half-vaults, with each half-vault comprising 39 identical major vault protein (MVP) chains, PARP4 and one or more vault RNAs (vRNAs).

It localises to the cytoplasm. It is found in the nucleus. Functionally, required for normal vault structure. Vaults are multi-subunit structures that may act as scaffolds for proteins involved in signal transduction. Vaults may also play a role in nucleo-cytoplasmic transport. This is Major vault protein (mvp) from Ictalurus punctatus (Channel catfish).